Reading from the N-terminus, the 1002-residue chain is UPF0182 protein alr1037 (1002 aa).

Transmembrane regions (helical) follow at residues 7-29 (FRLSIVFVGLWLLLDLSSRLGAE), 49-71 (RGVLWVVAAGVTAVYLWGNLALA), 123-145 (LRWLLPLAFVFSLLAGLILVHYG), 178-200 (QVFSQVLYLGLIVGIAIAILIYS), 202-224 (FFLRAIAVVLSVVFGTILFYNWA), 258-280 (LLELWLMGMFLYGFIAVTLTYLL), 300-319 (HLYGMGGLLMLMVAFSYWLS), 339-361 (VVVQLPIYNILCVLGLAIAFYLL), and 382-404 (GAYLFVVVAAGSVLPTIVQYLIV).

Belongs to the UPF0182 family.

The protein localises to the cell membrane. The sequence is that of UPF0182 protein alr1037 from Nostoc sp. (strain PCC 7120 / SAG 25.82 / UTEX 2576).